We begin with the raw amino-acid sequence, 162 residues long: Phosphopantetheine adenylyltransferase (162 aa).

Position 10 (threonine 10) interacts with substrate. ATP-binding positions include 10-11 (TF) and histidine 18. Residues lysine 42, methionine 74, and arginine 88 each coordinate substrate. ATP-binding positions include 89-91 (GLR), glutamate 99, and 124-130 (YAFLSST).

It belongs to the bacterial CoaD family. As to quaternary structure, homohexamer. Mg(2+) is required as a cofactor.

Its subcellular location is the cytoplasm. The catalysed reaction is (R)-4'-phosphopantetheine + ATP + H(+) = 3'-dephospho-CoA + diphosphate. It participates in cofactor biosynthesis; coenzyme A biosynthesis; CoA from (R)-pantothenate: step 4/5. Reversibly transfers an adenylyl group from ATP to 4'-phosphopantetheine, yielding dephospho-CoA (dPCoA) and pyrophosphate. This is Phosphopantetheine adenylyltransferase from Aliivibrio salmonicida (strain LFI1238) (Vibrio salmonicida (strain LFI1238)).